Reading from the N-terminus, the 231-residue chain is Superoxide dismutase [Mn] 1, mitochondrial (231 aa).

The transit peptide at 1-29 (MAIRCVASRKTLAGLKETSSRLLRIRGIQ) directs the protein to the mitochondrion. Residues histidine 55 and histidine 103 each contribute to the Mn(2+) site. Residue serine 124 is modified to Phosphoserine. Positions 192 and 196 each coordinate Mn(2+).

This sequence belongs to the iron/manganese superoxide dismutase family. In terms of assembly, homotetramer. It depends on Mn(2+) as a cofactor.

The protein localises to the mitochondrion matrix. It catalyses the reaction 2 superoxide + 2 H(+) = H2O2 + O2. With respect to regulation, activated by MTM1. Its function is as follows. Destroys superoxide anion radicals which are normally produced within the cells and which are toxic to biological systems. The chain is Superoxide dismutase [Mn] 1, mitochondrial (MSD1) from Arabidopsis thaliana (Mouse-ear cress).